The primary structure comprises 446 residues: Ribosomal protein uS12 methylthiotransferase RimO (446 aa).

The region spanning 9–121 is the MTTase N-terminal domain; the sequence is PKVGFVSLGC…VLDAIHAALP (113 aa). Positions 18, 54, 83, 152, 156, and 159 each coordinate [4Fe-4S] cluster. The 238-residue stretch at 138–375 folds into the Radical SAM core domain; the sequence is LTPPHYAYLK…MAVQEAISRQ (238 aa). Residues 378–445 enclose the TRAM domain; sequence QRRVGQRQRV…AHDLYGMVVS (68 aa).

This sequence belongs to the methylthiotransferase family. RimO subfamily. [4Fe-4S] cluster serves as cofactor.

The protein resides in the cytoplasm. It carries out the reaction L-aspartate(89)-[ribosomal protein uS12]-hydrogen + (sulfur carrier)-SH + AH2 + 2 S-adenosyl-L-methionine = 3-methylsulfanyl-L-aspartate(89)-[ribosomal protein uS12]-hydrogen + (sulfur carrier)-H + 5'-deoxyadenosine + L-methionine + A + S-adenosyl-L-homocysteine + 2 H(+). Catalyzes the methylthiolation of an aspartic acid residue of ribosomal protein uS12. This chain is Ribosomal protein uS12 methylthiotransferase RimO, found in Acidithiobacillus ferrooxidans (strain ATCC 23270 / DSM 14882 / CIP 104768 / NCIMB 8455) (Ferrobacillus ferrooxidans (strain ATCC 23270)).